A 122-amino-acid chain; its full sequence is MIQMQTELQVADNSGAKRVECIKVLGGSHRRYASIGDVIKVTVKEASPRGKAKKGSVYNAVVVRTAKGVRRKDGSKVRFDGNAAVLLNANGQPIGTRIFGPVTRELRTEKFMKIVSLAPEVL.

Belongs to the universal ribosomal protein uL14 family. As to quaternary structure, part of the 50S ribosomal subunit. Forms a cluster with proteins L3 and L19. In the 70S ribosome, L14 and L19 interact and together make contacts with the 16S rRNA in bridges B5 and B8.

In terms of biological role, binds to 23S rRNA. Forms part of two intersubunit bridges in the 70S ribosome. This Francisella tularensis subsp. holarctica (strain LVS) protein is Large ribosomal subunit protein uL14.